The chain runs to 412 residues: uncharacterized protein (412 aa).

[4Fe-4S] cluster contacts are provided by C62, C68, C71, and C143. 4 residues coordinate S-adenosyl-L-methionine: Q243, F270, E290, and D338. Catalysis depends on C364, which acts as the Nucleophile.

The protein belongs to the class I-like SAM-binding methyltransferase superfamily. RNA M5U methyltransferase family.

This is an uncharacterized protein from Mesorhizobium japonicum (strain LMG 29417 / CECT 9101 / MAFF 303099) (Mesorhizobium loti (strain MAFF 303099)).